Consider the following 644-residue polypeptide: uncharacterized protein (644 aa).

The chain crosses the membrane as a helical span at residues 16 to 38 (LLSYLGVVGVGIAGLCIYRSVWG). A compositionally biased stretch (basic and acidic residues) spans 586 to 603 (VRQLQKEAGEGEAEEHPR). The segment at 586–613 (VRQLQKEAGEGEAEEHPRARPAAGKAQR) is disordered.

The protein resides in the membrane. This is an uncharacterized protein from Treponema pallidum (strain Nichols).